Here is a 356-residue protein sequence, read N- to C-terminus: Protein MGF 360-10L (356 aa).

The stretch at 57 to 89 is one ANK repeat; the sequence is DLNTALMLATKENNYQLIKMFTDWGADINYGLI. Asn172 carries an N-linked (GlcNAc...) asparagine; by host glycan. Residues 249-271 form a helical membrane-spanning segment; that stretch reads NFLTIYYCFILGANINLAMIASI. N-linked (GlcNAc...) asparagine; by host glycosylation is found at Asn352 and Asn353.

Belongs to the asfivirus MGF 360 family.

It is found in the host membrane. Plays a role in virus cell tropism, and may be required for efficient virus replication in macrophages. This is Protein MGF 360-10L from African swine fever virus (isolate Tick/South Africa/Pretoriuskop Pr4/1996) (ASFV).